The primary structure comprises 851 residues: Protein NUD1 (851 aa).

Disordered stretches follow at residues 1 to 31 (MDMDTQEAELSSQLENLTINSPRKLRSNAHS) and 216 to 352 (LVGS…KAPS). The segment covering 8–21 (AELSSQLENLTINS) has biased composition (polar residues). Low complexity-rich tracts occupy residues 223–246 (NSNNKNNNNNNNNNNNNSININNK) and 260–278 (SNSFEFSSSSSMSSSQTQS). Residues 291–304 (NTISPGQLGYQFNH) show a composition bias toward polar residues. A compositionally biased stretch (low complexity) spans 320–333 (SSSHSLDNTSSNQS). Lys357 is covalently cross-linked (Glycyl lysine isopeptide (Lys-Gly) (interchain with G-Cter in ubiquitin)). Thr388 and Thr392 each carry phosphothreonine. Ser417 and Ser419 each carry phosphoserine. 5 LRR repeats span residues 544–566 (DLECLDLSYNLLNTSLKFLSLCH), 567–588 (HLQEVNLSYNSIQSLEGIGSSR), 589–609 (MKKLNLSNNEINGIIDFEQLI), 621–642 (TVEVLDLSNNNIIGVRNINCLP), and 643–664 (RLKVLNLNGNPLVSIVESSKME).

As to quaternary structure, interacts directly with MPC54, CNM67, SPO21/MPC70, ADY3 and ADY4. Probable component of a spindle pole boby (SPB) complex composed of ADY3, SSP1, DON1, MPC54, SPO21/MPC70, NUD1 and CNM67. In terms of processing, phosphorylated from S/G2 phase until the end of mitosis.

The protein resides in the cytoplasm. It is found in the cytoskeleton. Its subcellular location is the microtubule organizing center. The protein localises to the spindle pole body. It localises to the nucleus envelope. Its function is as follows. Involved in astral microtubule organization by binding SCP72 to the outer plaque in a cell-cycle dependent manner. Required for the mitotic exit by facilitating the binding of TEMP1 to CDC15. Also involved in the pathway that organizes the shaping and sizing of the prospore membrane (PSM) during sporulation. The protein is Protein NUD1 (NUD1) of Saccharomyces cerevisiae (strain ATCC 204508 / S288c) (Baker's yeast).